The sequence spans 784 residues: SWI/SNF complex subunit SWI3C homolog (784 aa).

Residues 1–10 are compositionally biased toward polar residues; the sequence is MPRKASSTSD. The segment at 1 to 68 is disordered; it reads MPRKASSTSD…PEDADDETLA (68 aa). Positions 24–39 are enriched in low complexity; that stretch reads ASPSPSNRSSAAAAAA. A compositionally biased stretch (acidic residues) spans 43-66; that stretch reads DDSDSAAVNEDDDSAVPEDADDET. The SWIRM domain maps to 185–284; the sequence is HVVPKHSDWF…YLASGSVHRG (100 aa). The ZZ-type; degenerate zinc-finger motif lies at 355 to 409; sequence LSESSCSYCLQPLTSLHYQSLKEADIALCSDCFHDARYITGHSSLDFQRIDGDND. Cys360, Cys363, Cys383, and Cys386 together coordinate Zn(2+). The SANT domain maps to 413–464; that stretch reads NDGDSWTDQETLLLLEGIEKYNDNWNNIAEHVGTKSKAQCIYHFIRLPVEDG. 2 disordered regions span residues 667-702 and 760-784; these read LASPGNSLPGGSTSTMSSNPMSMSPRPMGVPGSMPQ and GMPNSVTPNHHQLLRSSSGNNSSVG. The span at 675–695 shows a compositional bias: low complexity; that stretch reads PGGSTSTMSSNPMSMSPRPMG.

Interacts with LFR. Interacts with NMCP1.

The protein localises to the nucleus. Its subcellular location is the nucleoplasm. Its function is as follows. Component of a multiprotein complex equivalent of the SWI/SNF complex, an ATP-dependent chromatin-remodeling complex, which is required for the positive and negative regulation of gene expression of a large number of genes. It changes chromatin structure by altering DNA-histone contacts within a nucleosome, leading eventually to a change in nucleosome position, thus facilitating or repressing binding of gene-specific transcription factors. May be involved in positive response to drought stress and modulation of root growth through its interaction with NMCP1. The polypeptide is SWI/SNF complex subunit SWI3C homolog (Oryza sativa subsp. japonica (Rice)).